Consider the following 421-residue polypeptide: Tyrosine-protein phosphatase non-receptor type 20 (421 aa).

The interval 1-58 (MSSPGNVRQKHGRDNDEHEGDSDDLNLQKSLPSSSQQKTPTKPVFGNKVNSESVKTSH) is disordered. Over residues 27–41 (LQKSLPSSSQQKTPT) the composition is skewed to low complexity. Over residues 48–58 (KVNSESVKTSH) the composition is skewed to polar residues. S76 bears the Phosphoserine mark. The segment at 93–116 (RWSSVDPESAGPSKTVSTVLSESS) is disordered. Residues 104 to 116 (PSKTVSTVLSESS) show a composition bias toward polar residues. Phosphoserine is present on S122. The Tyrosine-protein phosphatase domain occupies 160–413 (IIREFLELEE…QFCYEIVLEV (254 aa)). Residues D324, 354 to 360 (CSAGVGR), and Q398 each bind substrate. C354 serves as the catalytic Phosphocysteine intermediate.

This sequence belongs to the protein-tyrosine phosphatase family. Non-receptor class subfamily.

It is found in the nucleus. Its subcellular location is the cytoplasm. The protein localises to the cytoskeleton. The protein resides in the microtubule organizing center. It localises to the centrosome. It carries out the reaction O-phospho-L-tyrosyl-[protein] + H2O = L-tyrosyl-[protein] + phosphate. Its function is as follows. Tyrosine-protein phosphatase targeted to sites of actin polymerization in response of varied extracellular stimuli. Has tyrosine phosphatase activity towards various tyrosyl phosphorylated substrates. This chain is Tyrosine-protein phosphatase non-receptor type 20 (Ptpn20), found in Rattus norvegicus (Rat).